A 165-amino-acid polypeptide reads, in one-letter code: Small ribosomal subunit protein uS5 (165 aa).

An S5 DRBM domain is found at leucine 13 to isoleucine 76.

This sequence belongs to the universal ribosomal protein uS5 family. Part of the 30S ribosomal subunit. Contacts proteins S4 and S8.

With S4 and S12 plays an important role in translational accuracy. Its function is as follows. Located at the back of the 30S subunit body where it stabilizes the conformation of the head with respect to the body. The polypeptide is Small ribosomal subunit protein uS5 (Chlamydia felis (strain Fe/C-56) (Chlamydophila felis)).